The following is a 209-amino-acid chain: MATPPTLPVTNQQAVQSQPPINTPAFRTFFSRLSTSIRDGLSQRRPWTELIDRSSMARPESLTDALSRIRKNLAYFKVNYVAIVSLVLAFSLFSHPLSLLVLIGLLGGWMFLYLFRPSDQPLVVFGRTFSDRETLLALVLSTIVVVFMTSVGSLLTSALMIGVAIVCVHGAFVVPDDLFLDEQEPANAGLLSFLGGSATSAAAAVSGRV.

N-acetylalanine is present on A2. A run of 5 helical transmembrane segments spans residues 73 to 93 (LAYF…FSLF), 95 to 115 (HPLS…LYLF), 133 to 153 (ETLL…SVGS), 154 to 174 (LLTS…AFVV), and 185 to 205 (PANA…AAAV).

It belongs to the PRA1 family. Can form homodimer. Interacts with PRA1B2, PRA1B3, PRA1B4, PRA1B5, PRA1B6 and PRA1E.

Its subcellular location is the endosome membrane. Functionally, may be involved in both secretory and endocytic intracellular trafficking in the endosomal/prevacuolar compartments. The chain is PRA1 family protein B1 (PRA1B1) from Arabidopsis thaliana (Mouse-ear cress).